Here is a 276-residue protein sequence, read N- to C-terminus: Undecaprenyl-diphosphatase 1 (276 aa).

8 helical membrane passes run 1–21 (MSLWFLVFLSVLQGVTELFPV), 44–64 (QLLPFLVALHLGTALALLWYF), 87–107 (GHLMWALIIGTIPTGLVGLLL), 114–134 (VFHDLRIVAAALIINGVLLWL), 150–170 (LTFKQAFFVGLAQVGALIPGF), 190–210 (AAEFSFLLGTPIIFAAGLLEL), 222–242 (DALLGGVLTAIAAYLSVRFLM), and 251–271 (LASFGLYCVLAGLFCLGWFMF).

This sequence belongs to the UppP family.

It localises to the cell inner membrane. The catalysed reaction is di-trans,octa-cis-undecaprenyl diphosphate + H2O = di-trans,octa-cis-undecaprenyl phosphate + phosphate + H(+). Its function is as follows. Catalyzes the dephosphorylation of undecaprenyl diphosphate (UPP). Confers resistance to bacitracin. The protein is Undecaprenyl-diphosphatase 1 of Burkholderia pseudomallei (strain 1106a).